We begin with the raw amino-acid sequence, 212 residues long: Tetraspanin-31-A (212 aa).

At 1-12 (MVCGGFTCSKNA) the chain is on the cytoplasmic side. A helical membrane pass occupies residues 13–33 (LCALNVVYMLVGLLLIGVAAW). The Extracellular segment spans residues 34–44 (GKGFGIVSSIH). A helical transmembrane segment spans residues 45-65 (IIGGVIAIGVFLLLIAIIGLI). Over 66-72 (GAVSHHQ) the chain is Cytoplasmic. Residues 73–93 (VMLFIYMVVLILVFIFQFIVS) form a helical membrane-spanning segment. Residues 94–175 (CSCLAMNRSQ…MLNHADEALK (82 aa)) lie on the Extracellular side of the membrane. 4 N-linked (GlcNAc...) asparagine glycosylation sites follow: Asn-100, Asn-109, Asn-117, and Asn-134. The chain crosses the membrane as a helical span at residues 176–196 (ILGGVGLFFSFTEILGVWLAF). Topologically, residues 197 to 212 (RFRNQKDPRANPSAFL) are cytoplasmic.

This sequence belongs to the tetraspanin (TM4SF) family.

The protein resides in the membrane. This Xenopus laevis (African clawed frog) protein is Tetraspanin-31-A (tspan31-a).